The primary structure comprises 140 residues: Ribosome maturation factor RimP (140 aa).

It belongs to the RimP family.

The protein localises to the cytoplasm. Its function is as follows. Required for maturation of 30S ribosomal subunits. The sequence is that of Ribosome maturation factor RimP from Campylobacter fetus subsp. fetus (strain 82-40).